Reading from the N-terminus, the 591-residue chain is Pyruvate kinase 2 (591 aa).

R38 serves as a coordination point for substrate. K(+) is bound by residues N40, S42, and D72. An ATP-binding site is contributed by 40–43 (NFSH). ATP is bound by residues R79 and K164. Residue E229 participates in Mg(2+) binding. Residues G252, D253, and T285 each coordinate substrate. Residue D253 participates in Mg(2+) binding.

This sequence belongs to the pyruvate kinase family. In the C-terminal section; belongs to the PEP-utilizing enzyme family. Homotetramer. It depends on Mg(2+) as a cofactor. K(+) serves as cofactor.

It catalyses the reaction pyruvate + ATP = phosphoenolpyruvate + ADP + H(+). Its pathway is carbohydrate degradation; glycolysis; pyruvate from D-glyceraldehyde 3-phosphate: step 5/5. This chain is Pyruvate kinase 2 (pyk2), found in Synechocystis sp. (strain ATCC 27184 / PCC 6803 / Kazusa).